A 210-amino-acid polypeptide reads, in one-letter code: Thymidylate kinase (210 aa).

Residue 10 to 17 (GLEGAGKS) participates in ATP binding.

Belongs to the thymidylate kinase family.

The enzyme catalyses dTMP + ATP = dTDP + ADP. Its function is as follows. Phosphorylation of dTMP to form dTDP in both de novo and salvage pathways of dTTP synthesis. The chain is Thymidylate kinase from Hamiltonella defensa subsp. Acyrthosiphon pisum (strain 5AT).